A 349-amino-acid polypeptide reads, in one-letter code: Protein-glutamate methylesterase/protein-glutamine glutaminase (349 aa).

The Response regulatory domain maps to 5 to 122 (RVLSVDDSAL…REGMLAYSEM (118 aa)). D56 carries the 4-aspartylphosphate modification. Residues 152 to 344 (LLSSEKLIAI…QQMLAKISAG (193 aa)) enclose the CheB-type methylesterase domain. Catalysis depends on residues S164, H190, and D286.

It belongs to the CheB family. In terms of processing, phosphorylated by CheA. Phosphorylation of the N-terminal regulatory domain activates the methylesterase activity.

The protein localises to the cytoplasm. The enzyme catalyses [protein]-L-glutamate 5-O-methyl ester + H2O = L-glutamyl-[protein] + methanol + H(+). It catalyses the reaction L-glutaminyl-[protein] + H2O = L-glutamyl-[protein] + NH4(+). Its function is as follows. Involved in chemotaxis. Part of a chemotaxis signal transduction system that modulates chemotaxis in response to various stimuli. Catalyzes the demethylation of specific methylglutamate residues introduced into the chemoreceptors (methyl-accepting chemotaxis proteins or MCP) by CheR. Also mediates the irreversible deamidation of specific glutamine residues to glutamic acid. This chain is Protein-glutamate methylesterase/protein-glutamine glutaminase, found in Escherichia coli O157:H7.